Here is an 88-residue protein sequence, read N- to C-terminus: ATP synthase epsilon chain (88 aa).

This sequence belongs to the ATPase epsilon chain family. F-type ATPases have 2 components, CF(1) - the catalytic core - and CF(0) - the membrane proton channel. CF(1) has five subunits: alpha(3), beta(3), gamma(1), delta(1), epsilon(1). CF(0) has three main subunits: a, b and c.

Its subcellular location is the cell inner membrane. Its function is as follows. Produces ATP from ADP in the presence of a proton gradient across the membrane. This is ATP synthase epsilon chain (atpC) from Chlorobaculum tepidum (strain ATCC 49652 / DSM 12025 / NBRC 103806 / TLS) (Chlorobium tepidum).